An 879-amino-acid polypeptide reads, in one-letter code: Leucine--tRNA ligase (879 aa).

Residues 45–55 (PYPSGALHMGH) carry the 'HIGH' region motif. The 'KMSKS' region motif lies at 637 to 641 (KMSKS). ATP is bound at residue Lys640.

Belongs to the class-I aminoacyl-tRNA synthetase family.

Its subcellular location is the cytoplasm. It catalyses the reaction tRNA(Leu) + L-leucine + ATP = L-leucyl-tRNA(Leu) + AMP + diphosphate. The protein is Leucine--tRNA ligase of Xylella fastidiosa (strain M23).